We begin with the raw amino-acid sequence, 483 residues long: 2-methylcitrate dehydratase (483 aa).

The protein belongs to the PrpD family. As to quaternary structure, monomer.

The catalysed reaction is (2S,3S)-2-methylcitrate = 2-methyl-cis-aconitate + H2O. The enzyme catalyses citrate = D-threo-isocitrate. Its pathway is organic acid metabolism; propanoate degradation. It functions in the pathway carbohydrate metabolism; tricarboxylic acid cycle; isocitrate from oxaloacetate: step 2/2. Involved in the catabolism of short chain fatty acids (SCFA) via the tricarboxylic acid (TCA)(acetyl degradation route) and via the 2-methylcitrate cycle I (propionate degradation route). Catalyzes the dehydration of 2-methylcitrate (2-MC) to yield the cis isomer of 2-methyl-aconitate. It is also able to catalyze the dehydration of citrate and the hydration of cis-aconitate at a lower rate. Due to its broad substrate specificity, it seems to be responsible for the residual aconitase activity of the acnAB-null mutant. In Escherichia coli (strain K12), this protein is 2-methylcitrate dehydratase.